The chain runs to 161 residues: EP300-interacting inhibitor of differentiation 2B (161 aa).

2 disordered regions span residues 1–26 and 54–77; these read MAEP…GTAS and ARSM…GLAS.

Homodimer and heterodimer with EID2. Interacts with HDAC1 and HDAC2.

Its subcellular location is the nucleus. Functionally, acts as a repressor of MYOD-dependent transcription, glucocorticoid receptor-dependent transcription, and muscle differentiation. The chain is EP300-interacting inhibitor of differentiation 2B from Homo sapiens (Human).